We begin with the raw amino-acid sequence, 602 residues long: Elongation factor 4 (602 aa).

Residues 8 to 189 enclose the tr-type G domain; that stretch reads KNIRNFSIIA…KIITTIPAPS (182 aa). GTP-binding positions include 20–25 and 136–139; these read DHGKST and NKID.

The protein belongs to the TRAFAC class translation factor GTPase superfamily. Classic translation factor GTPase family. LepA subfamily.

The protein localises to the cell inner membrane. It catalyses the reaction GTP + H2O = GDP + phosphate + H(+). Required for accurate and efficient protein synthesis under certain stress conditions. May act as a fidelity factor of the translation reaction, by catalyzing a one-codon backward translocation of tRNAs on improperly translocated ribosomes. Back-translocation proceeds from a post-translocation (POST) complex to a pre-translocation (PRE) complex, thus giving elongation factor G a second chance to translocate the tRNAs correctly. Binds to ribosomes in a GTP-dependent manner. The sequence is that of Elongation factor 4 from Helicobacter pylori (strain G27).